Consider the following 261-residue polypeptide: Arcelin-5A (261 aa).

Residues 1 to 21 (MASSKLLSLALFLVLLTHANS) form the signal peptide. Residues Asn43, Asn91, and Asn100 are each glycosylated (N-linked (GlcNAc...) asparagine). A disulfide bond links Cys167 and Cys203. The propeptide occupies 255 to 261 (ILLNNIL).

Belongs to the leguminous lectin family. As to quaternary structure, monomer. The C-terminal segment appears to be highly susceptible to proteolysis.

Its function is as follows. Seed storage. This carbohydrate-binding lectin has toxic effects on bean bruchid pests. The sequence is that of Arcelin-5A (ARC5A) from Phaseolus vulgaris (Kidney bean).